A 212-amino-acid polypeptide reads, in one-letter code: Octanoyltransferase (212 aa).

A BPL/LPL catalytic domain is found at 33 to 212; sequence GTAPELVWLL…ATFPEVFGAD (180 aa). Residues 72 to 79, 144 to 146, and 157 to 159 contribute to the substrate site; these read RGGQYTYH, AIG, and GIA. Residue Cys175 is the Acyl-thioester intermediate of the active site.

It belongs to the LipB family.

The protein localises to the cytoplasm. It carries out the reaction octanoyl-[ACP] + L-lysyl-[protein] = N(6)-octanoyl-L-lysyl-[protein] + holo-[ACP] + H(+). Its pathway is protein modification; protein lipoylation via endogenous pathway; protein N(6)-(lipoyl)lysine from octanoyl-[acyl-carrier-protein]: step 1/2. Its function is as follows. Catalyzes the transfer of endogenously produced octanoic acid from octanoyl-acyl-carrier-protein onto the lipoyl domains of lipoate-dependent enzymes. Lipoyl-ACP can also act as a substrate although octanoyl-ACP is likely to be the physiological substrate. The polypeptide is Octanoyltransferase (Paramagnetospirillum magneticum (strain ATCC 700264 / AMB-1) (Magnetospirillum magneticum)).